A 687-amino-acid polypeptide reads, in one-letter code: DNA-directed RNA polymerase subunit beta' (687 aa).

Residues Cys69, Cys71, Cys87, and Cys90 each coordinate Zn(2+). The Mg(2+) site is built by Asp495, Asp497, and Asp499.

Belongs to the RNA polymerase beta' chain family. RpoC1 subfamily. In plastids the minimal PEP RNA polymerase catalytic core is composed of four subunits: alpha, beta, beta', and beta''. When a (nuclear-encoded) sigma factor is associated with the core the holoenzyme is formed, which can initiate transcription. Mg(2+) is required as a cofactor. Requires Zn(2+) as cofactor.

Its subcellular location is the plastid. It localises to the chloroplast. It catalyses the reaction RNA(n) + a ribonucleoside 5'-triphosphate = RNA(n+1) + diphosphate. In terms of biological role, DNA-dependent RNA polymerase catalyzes the transcription of DNA into RNA using the four ribonucleoside triphosphates as substrates. The chain is DNA-directed RNA polymerase subunit beta' from Solanum tuberosum (Potato).